The sequence spans 191 residues: Insulin-like peptide INSL6 (191 aa).

Residues 1-22 (MKQLCCSCLLWLGLLLTPFSRE) form the signal peptide. 3 cysteine pairs are disulfide-bonded: Cys-33/Cys-172, Cys-45/Cys-185, and Cys-171/Cys-176. Positions 53 to 161 (FEMEEQSPMT…RSLFWGNHSQ (109 aa)) are cleaved as a propeptide — connecting peptide.

Belongs to the insulin family.

It is found in the secreted. Functionally, may have a role in sperm development and fertilization. This Mus musculus (Mouse) protein is Insulin-like peptide INSL6 (Insl6).